We begin with the raw amino-acid sequence, 222 residues long: L-cystine transport system permease protein TcyL (222 aa).

The Periplasmic segment spans residues methionine 1 to threonine 22. Residues alanine 19–glutamine 207 enclose the ABC transmembrane type-1 domain. A helical transmembrane segment spans residues leucine 23–methionine 43. Residues arginine 44–glycine 64 lie on the Cytoplasmic side of the membrane. Residues threonine 65–leucine 85 form a helical membrane-spanning segment. At aspartate 86–threonine 182 the chain is on the periplasmic side. Residues leucine 183–leucine 203 traverse the membrane as a helical segment. The Cytoplasmic portion of the chain corresponds to serine 204–lysine 222.

Belongs to the binding-protein-dependent transport system permease family. HisMQ subfamily. As to quaternary structure, the complex is composed of two ATP-binding proteins (TcyN), two transmembrane proteins (TcyL) and a solute-binding protein (TcyJ).

The protein resides in the cell inner membrane. Its function is as follows. Part of the ABC transporter complex TcyJLN involved in L-cystine import. Responsible for the translocation of the substrate across the membrane. This chain is L-cystine transport system permease protein TcyL, found in Escherichia coli O6:H1 (strain CFT073 / ATCC 700928 / UPEC).